Reading from the N-terminus, the 542-residue chain is Chaperonin GroEL 1 (542 aa).

ATP contacts are provided by residues 30–33 (TLGP), K51, 87–91 (DGTTT), G415, and D496.

Belongs to the chaperonin (HSP60) family. In terms of assembly, forms a cylinder of 14 subunits composed of two heptameric rings stacked back-to-back. Interacts with the co-chaperonin GroES.

It is found in the cytoplasm. It carries out the reaction ATP + H2O + a folded polypeptide = ADP + phosphate + an unfolded polypeptide.. In terms of biological role, together with its co-chaperonin GroES, plays an essential role in assisting protein folding. The GroEL-GroES system forms a nano-cage that allows encapsulation of the non-native substrate proteins and provides a physical environment optimized to promote and accelerate protein folding. The chain is Chaperonin GroEL 1 from Sinorhizobium fredii (strain NBRC 101917 / NGR234).